Consider the following 197-residue polypeptide: Large ribosomal subunit protein uL13B (197 aa).

Position 193 is a phosphoserine (Ser193).

This sequence belongs to the universal ribosomal protein uL13 family. In terms of assembly, component of the large ribosomal subunit (LSU). Mature yeast ribosomes consist of a small (40S) and a large (60S) subunit. The 40S small subunit contains 1 molecule of ribosomal RNA (18S rRNA) and at least 33 different proteins. The large 60S subunit contains 3 rRNA molecules (25S, 5.8S and 5S rRNA) and at least 46 different proteins.

It localises to the cytoplasm. Component of the ribosome, a large ribonucleoprotein complex responsible for the synthesis of proteins in the cell. The small ribosomal subunit (SSU) binds messenger RNAs (mRNAs) and translates the encoded message by selecting cognate aminoacyl-transfer RNA (tRNA) molecules. The large subunit (LSU) contains the ribosomal catalytic site termed the peptidyl transferase center (PTC), which catalyzes the formation of peptide bonds, thereby polymerizing the amino acids delivered by tRNAs into a polypeptide chain. The nascent polypeptides leave the ribosome through a tunnel in the LSU and interact with protein factors that function in enzymatic processing, targeting, and the membrane insertion of nascent chains at the exit of the ribosomal tunnel. The protein is Large ribosomal subunit protein uL13B (rpl1601) of Schizosaccharomyces pombe (strain 972 / ATCC 24843) (Fission yeast).